We begin with the raw amino-acid sequence, 242 residues long: MAGHSKWANIKHKKQKTDAQKGKIFTKIGREIAIVVKQGGPDPEVNSKLKDVIAKAKAANMPNETIMRSIKKAAGEVDSTNYEEVVYEGYGPGGVAVIVEATTDNRNRTAGEVRHLFDKFGGNLGTTGCVSFMFDKKGVILIEKSDKVNEDDLMMKALDLGAEDFTAEDEYFEIITAPEDFSKVREGLEKEGYEFVEAEVEMVPQTTTTLTDPKHIEFMNKLIDSLEDLDDVQNVYHNWYGE.

It belongs to the TACO1 family.

The protein resides in the cytoplasm. The polypeptide is Probable transcriptional regulatory protein Cthe_2075 (Acetivibrio thermocellus (strain ATCC 27405 / DSM 1237 / JCM 9322 / NBRC 103400 / NCIMB 10682 / NRRL B-4536 / VPI 7372) (Clostridium thermocellum)).